The following is an 824-amino-acid chain: Acyl-homoserine lactone acylase QuiP (824 aa).

The signal sequence occupies residues 1 to 26 (MASPALRHFLPRFGAAAAAASFLSLA). The active-site Nucleophile is the serine 264.

Belongs to the peptidase S45 family. As to quaternary structure, heterodimer of an alpha subunit and a beta subunit processed from the same precursor.

The protein localises to the periplasm. The enzyme catalyses an N-acyl-L-homoserine lactone + H2O = L-homoserine lactone + a carboxylate. In terms of biological role, catalyzes the deacylation of acyl-homoserine lactone (AHL or acyl-HSL), releasing homoserine lactone (HSL) and the corresponding fatty acid. Possesses a specificity for the degradation of long-chain acyl-HSLs (side chains of seven or more carbons in length). This chain is Acyl-homoserine lactone acylase QuiP (quiP), found in Pseudomonas syringae pv. syringae (strain B728a).